The primary structure comprises 231 residues: MKLPQPLFQGTLIRRYQRFLADVELEDGTVVTAHTPNTGSMMGCACPGNRVLLSKSASLTRKYPHSWELVQADGTWVGINTQLPNLLAREAILDGTISELSGYRQIRGEVPYGSGSRIDLLLSGERGLCYVETKNVTLVKDGVALFPDAVSARGQKHLRELMEMVRQGHRAVNLFIVQRADGVALAPADAIDPVYGRLLREAAQNGVEILAYRAEVTRTEVRLERALPVLL.

Belongs to the SfsA family.

The polypeptide is Sugar fermentation stimulation protein homolog (Geobacter sp. (strain M21)).